Reading from the N-terminus, the 333-residue chain is Transcription initiation factor IIB (333 aa).

The segment at 33–64 adopts a TFIIB-type zinc-finger fold; the sequence is EVYKCPICGNDKFVYNYERGEAVCIVCGAVVQ. Zn(2+)-binding residues include C37, C40, C56, and C59. A run of 2 repeats spans residues 149-232 and 243-324.

This sequence belongs to the TFIIB family.

Stabilizes TBP binding to an archaeal box-A promoter. Also responsible for recruiting RNA polymerase II to the pre-initiation complex (DNA-TBP-TFIIB). The protein is Transcription initiation factor IIB of Pyrobaculum aerophilum (strain ATCC 51768 / DSM 7523 / JCM 9630 / CIP 104966 / NBRC 100827 / IM2).